A 477-amino-acid chain; its full sequence is Bifunctional protein HldE (477 aa).

Residues 1 to 318 (MKVNLPAFER…ENAVRGRADT (318 aa)) form a ribokinase region. 195 to 198 (NLSE) lines the ATP pocket. Asp264 is a catalytic residue. A cytidylyltransferase region spans residues 344-477 (MTNGVFDILH…IKKIQTESEK (134 aa)).

In the N-terminal section; belongs to the carbohydrate kinase PfkB family. This sequence in the C-terminal section; belongs to the cytidylyltransferase family. Homodimer.

It catalyses the reaction D-glycero-beta-D-manno-heptose 7-phosphate + ATP = D-glycero-beta-D-manno-heptose 1,7-bisphosphate + ADP + H(+). It carries out the reaction D-glycero-beta-D-manno-heptose 1-phosphate + ATP + H(+) = ADP-D-glycero-beta-D-manno-heptose + diphosphate. Its pathway is nucleotide-sugar biosynthesis; ADP-L-glycero-beta-D-manno-heptose biosynthesis; ADP-L-glycero-beta-D-manno-heptose from D-glycero-beta-D-manno-heptose 7-phosphate: step 1/4. The protein operates within nucleotide-sugar biosynthesis; ADP-L-glycero-beta-D-manno-heptose biosynthesis; ADP-L-glycero-beta-D-manno-heptose from D-glycero-beta-D-manno-heptose 7-phosphate: step 3/4. Catalyzes the phosphorylation of D-glycero-D-manno-heptose 7-phosphate at the C-1 position to selectively form D-glycero-beta-D-manno-heptose-1,7-bisphosphate. In terms of biological role, catalyzes the ADP transfer from ATP to D-glycero-beta-D-manno-heptose 1-phosphate, yielding ADP-D-glycero-beta-D-manno-heptose. The sequence is that of Bifunctional protein HldE from Salmonella paratyphi A (strain ATCC 9150 / SARB42).